The chain runs to 688 residues: Methionine--tRNA ligase (688 aa).

Residues 20 to 30 (PYANGSIHLGH) carry the 'HIGH' region motif. Residues Cys151, Cys154, Cys164, and Cys167 each coordinate Zn(2+). The 'KMSKS' region signature appears at 337-341 (KMSKS). An ATP-binding site is contributed by Lys340. A tRNA-binding domain is found at 587-688 (TFAQVDLRIA…EGAQPGMRVM (102 aa)).

It belongs to the class-I aminoacyl-tRNA synthetase family. MetG type 1 subfamily. Homodimer. Requires Zn(2+) as cofactor.

The protein localises to the cytoplasm. It carries out the reaction tRNA(Met) + L-methionine + ATP = L-methionyl-tRNA(Met) + AMP + diphosphate. In terms of biological role, is required not only for elongation of protein synthesis but also for the initiation of all mRNA translation through initiator tRNA(fMet) aminoacylation. This Vibrio parahaemolyticus serotype O3:K6 (strain RIMD 2210633) protein is Methionine--tRNA ligase.